We begin with the raw amino-acid sequence, 309 residues long: Serine/threonine-protein phosphatase CPPED1 (309 aa).

The interval 47-250 (WRIGDCDSGG…FSGHYHRNAG (204 aa)) is catalytic. A divalent metal cation-binding residues include Asp-51, Asp-88, Asn-125, and His-244.

Belongs to the metallophosphoesterase superfamily. CPPED1 family. Requires a divalent metal cation as cofactor.

The protein resides in the cytoplasm. It carries out the reaction O-phospho-L-seryl-[protein] + H2O = L-seryl-[protein] + phosphate. The catalysed reaction is O-phospho-L-threonyl-[protein] + H2O = L-threonyl-[protein] + phosphate. Its function is as follows. Protein phosphatase involved in the dephosphorylation of AKT kinase family. In Danio rerio (Zebrafish), this protein is Serine/threonine-protein phosphatase CPPED1 (cpped1).